The primary structure comprises 1364 residues: Collagen alpha-2(I) chain (1364 aa).

Positions 1–22 (MLSFVDTRTLLLLAVTSCLATC) are cleaved as a signal peptide. At Gln-23 the chain carries Pyrrolidone carboxylic acid. The propeptide at 23-79 (QSLQEATARKGPSGDRGPRGERGPPGPPGRDGDDGIPGPPGPPGPPGPPGLGGNFAA) is N-terminal propeptide. Residues 26–1128 (QEATARKGPS…QPRSPTSLRP (1103 aa)) are disordered. The span at 34–44 (PSGDRGPRGER) shows a compositional bias: basic and acidic residues. The segment covering 59–71 (PGPPGPPGPPGPP) has biased composition (pro residues). Residue Gln-80 is modified to Pyrrolidone carboxylic acid. At Lys-84 the chain carries Allysine. Residues 93-130 (LMGPRGPPGASGAPGPQGFQGPPGEPGEPGQTGPAGAR) show a composition bias toward low complexity. 12 positions are modified to 4-hydroxyproline: Pro-100, Pro-106, Pro-115, Pro-118, Pro-121, Pro-133, Pro-136, Pro-145, Pro-151, Pro-166, Pro-169, and Pro-172. Residues 139–153 (AGEDGHPGKPGRPGE) show a composition bias toward basic and acidic residues. A 5-hydroxylysine; alternate modification is found at Lys-175. Residue Lys-175 is glycosylated (O-linked (Gal...) hydroxylysine; alternate). 4-hydroxyproline occurs at positions 190 and 193. Lys-196 is modified (5-hydroxylysine). A 4-hydroxyproline mark is found at Pro-199, Pro-202, Pro-208, Pro-217, Pro-226, Pro-253, Pro-256, and Pro-259. Over residues 223 to 252 (VGAPGPAGARGSDGSVGPVGPAGPIGSAGP) the composition is skewed to low complexity. A 5-hydroxylysine modification is found at Lys-262. 4 positions are modified to 4-hydroxyproline: Pro-271, Pro-286, Pro-295, and Pro-304. The segment covering 277–291 (AGPRGEVGLPGLSGP) has biased composition (low complexity). Over residues 298–319 (PGANGLPGAKGAAGLPGVAGAP) the composition is skewed to low complexity. Residue Lys-307 is modified to 5-hydroxylysine. 4-hydroxyproline occurs at positions 313, 319, 322, 328, and 346. The segment covering 328 to 343 (PGPVGAAGATGARGLV) has biased composition (low complexity). A 5-hydroxylysine modification is found at Lys-352. 9 positions are modified to 4-hydroxyproline: Pro-361, Pro-367, Pro-370, Pro-391, Pro-394, Pro-400, Pro-406, Pro-439, and Pro-442. Residues 396–406 (LRGNPGSRGLP) are compositionally biased toward low complexity. Composition is skewed to low complexity over residues 468–487 (LPGI…RGEP) and 511–535 (AGLA…PGLQ). Residues 536–545 (GVQGGKGEQG) show a composition bias toward gly residues. Composition is skewed to low complexity over residues 592-609 (PGES…SRGP), 621-643 (EPGV…PGER), 666-688 (SPGR…AGAN), and 715-735 (VGPA…QPGA). Residues 736–745 (KGERGTKGPK) are compositionally biased toward basic and acidic residues. Positions 748–763 (NGPVGPTGPVGAAGPS) are enriched in low complexity. Residues 773-782 (GSRGDGGPPG) show a composition bias toward gly residues. Low complexity-rich tracts occupy residues 783–793 (ATGFPGAAGRT), 861–874 (PQGL…LGLP), 891–930 (EPGP…NPGN), 948–961 (YPGN…AGAP), and 978–999 (EPGP…PSGP). Positions 1003 to 1014 (RGDKGEPGDKGP) are enriched in basic and acidic residues. The span at 1087–1101 (AGPPGPPGPPGPPGP) shows a compositional bias: pro residues. A propeptide spans 1118-1364 (DQPRSPTSLR…RLNIGPVCFK (247 aa)) (C-terminal propeptide). The Fibrillar collagen NC1 domain maps to 1131 to 1364 (YEVDATLKSL…RLNIGPVCFK (234 aa)). Cystine bridges form between Cys-1161–Cys-1193, Cys-1201–Cys-1362, and Cys-1270–Cys-1315. Ca(2+) contacts are provided by Asp-1179, Asn-1181, Gln-1182, Cys-1184, and Asp-1187. An N-linked (GlcNAc...) asparagine glycan is attached at Asn-1265.

This sequence belongs to the fibrillar collagen family. In terms of assembly, trimers of one alpha 2(I) and two alpha 1(I) chains. Interacts (via C-terminus) with TMEM131 (via PapD-L domain); the interaction is direct and is involved in assembly and TRAPPIII ER-to-Golgi transport complex-dependent secretion of collagen. In terms of processing, prolines at the third position of the tripeptide repeating unit (G-X-Y) are hydroxylated in some or all of the chains. In terms of tissue distribution, forms the fibrils of tendon, ligaments and bones. In bones the fibrils are mineralized with calcium hydroxyapatite.

The protein localises to the secreted. Its subcellular location is the extracellular space. The protein resides in the extracellular matrix. Functionally, type I collagen is a member of group I collagen (fibrillar forming collagen). This Bos taurus (Bovine) protein is Collagen alpha-2(I) chain (COL1A2).